A 179-amino-acid chain; its full sequence is Large ribosomal subunit protein uL6 (179 aa).

The protein belongs to the universal ribosomal protein uL6 family. Part of the 50S ribosomal subunit.

Its function is as follows. This protein binds to the 23S rRNA, and is important in its secondary structure. It is located near the subunit interface in the base of the L7/L12 stalk, and near the tRNA binding site of the peptidyltransferase center. This Akkermansia muciniphila (strain ATCC BAA-835 / DSM 22959 / JCM 33894 / BCRC 81048 / CCUG 64013 / CIP 107961 / Muc) protein is Large ribosomal subunit protein uL6.